A 515-amino-acid chain; its full sequence is Tabersonine 6,7-epoxidase isoform 2 (515 aa).

The helical transmembrane segment at 1–21 threads the bilayer; it reads MEFVVSPFAFLIFFFILLKMI. N-linked (GlcNAc...) asparagine glycosylation is found at Asn173, Asn259, and Asn352. Position 449 (Cys449) interacts with heme.

Belongs to the cytochrome P450 family. Heme serves as cofactor. As to expression, mainly expressed in aerial organs, including stems, leaves and flowers.

The protein localises to the endoplasmic reticulum membrane. It carries out the reaction (-)-tabersonine + reduced [NADPH--hemoprotein reductase] + O2 = lochnericine + oxidized [NADPH--hemoprotein reductase] + H2O + H(+). Its pathway is alkaloid biosynthesis. Component of the monoterpenoid indole alkaloids (MIAs, e.g. echitovenine, tabersonine, lochnericine, 19-hydroxytabersonine and horhammericine) biosynthetic pathway; MIAs are used in cancer treatment and other medical applications. Cytochrome P450 catalyzing the conversion of tabersonine to lochnericine. The chain is Tabersonine 6,7-epoxidase isoform 2 from Catharanthus roseus (Madagascar periwinkle).